The following is a 472-amino-acid chain: Cysteine--tRNA ligase (472 aa).

Position 29 (Cys-29) interacts with Zn(2+). The 'HIGH' region signature appears at 31-41 (ITVYDYCHLGH). Residues Cys-214, His-239, and Glu-243 each coordinate Zn(2+). The 'KMSKS' region motif lies at 271–275 (KMSKS). Residue Lys-274 coordinates ATP.

The protein belongs to the class-I aminoacyl-tRNA synthetase family. Monomer. Requires Zn(2+) as cofactor.

It is found in the cytoplasm. The catalysed reaction is tRNA(Cys) + L-cysteine + ATP = L-cysteinyl-tRNA(Cys) + AMP + diphosphate. The chain is Cysteine--tRNA ligase from Picosynechococcus sp. (strain ATCC 27264 / PCC 7002 / PR-6) (Agmenellum quadruplicatum).